Here is a 352-residue protein sequence, read N- to C-terminus: Putative GATA transcription factor 22 (352 aa).

The disordered stretch occupies residues 27 to 53 (SLHHHLQQQQQQQQHFHHQASSNPSSL). Positions 33-53 (QQQQQQQQHFHHQASSNPSSL) are enriched in low complexity. Positions 112 to 119 (PKKETRLK) match the Nuclear localization signal motif. The interval 163 to 189 (AIITTSDSSKQHTNNDQSSNLSNSERQ) is disordered. A compositionally biased stretch (polar residues) spans 165–189 (ITTSDSSKQHTNNDQSSNLSNSERQ). Residues 195–249 (DCVIRICSDCNTTKTPLWRSGPRGPKSLCNACGIRQRKARRAAMATATATAVSGV) form a GATA-type zinc finger.

It belongs to the type IV zinc-finger family. Class B subfamily. Forms heterodimers with GATA18. As to expression, expressed predominantly in leaves, and barely in stems, flowers and siliques.

It is found in the nucleus. In terms of biological role, transcriptional regulator that specifically binds 5'-GATA-3' or 5'-GAT-3' motifs within gene promoters. Involved in the modulation of chloroplast development, growth and division in a cytokinin-dependent manner. Repressor of the gibberellic acid (GA) signaling pathway that regulates flowering and modulates greening, in a SOC1-dependent manner. Prevents the accumulation of SOC1 during flowering. Promotes chlorophyll biosynthesis throughout the plant, by regulating chlorophyll biosynthetic genes (e.g. HEMA1 and GUN4) and chloroplast localized glutamate synthase (e.g. GLU1). Involved in the regulation of sugar-sensing genes (e.g. HXK1, HXK2, STP13 and PLT6). Regulator of germination, senescence, elongation growth and flowering time. Influences also leaf starch content. The polypeptide is Putative GATA transcription factor 22 (Arabidopsis thaliana (Mouse-ear cress)).